Reading from the N-terminus, the 212-residue chain is Nucleoside diphosphate kinase homolog 5 (212 aa).

An NDK region spans residues 13–145 (EKTLAIIKPD…EREIRFMFPE (133 aa)).

Belongs to the NDK family. In terms of assembly, component of the axonemal radial spoke complex 1 (RS1), at least composed of spoke head proteins RSPH1, RSPH3, RSPH9 and the cilia-specific component RSPH4A or sperm-specific component RSPH6A, spoke stalk proteins RSPH14, DNAJB13, DYDC1, ROPN1L and NME5, and the anchor protein IQUB. Interacts with IQUB. Specifically expressed in testis germinal cells.

The protein resides in the cell projection. It localises to the cilium. It is found in the cytoplasm. Its subcellular location is the cytoskeleton. The protein localises to the flagellum axoneme. Functionally, functions as part of axonemal radial spoke complexes that play an important part in the motility of sperm and cilia. Does not seem to have nucleoside diphosphate kinase (NDPK) activity. Confers protection from cell death by BAX and alters the cellular levels of several antioxidant enzymes including GPX5. May play a role in spermiogenesis by increasing the ability of late-stage spermatids to eliminate reactive oxygen species. Exhibits a 3'-5' exonuclease activity with a preference for single-stranded DNA, suggesting roles in DNA proofreading and repair. The protein is Nucleoside diphosphate kinase homolog 5 of Homo sapiens (Human).